Here is a 154-residue protein sequence, read N- to C-terminus: 6,7-dimethyl-8-ribityllumazine synthase (154 aa).

5-amino-6-(D-ribitylamino)uracil-binding positions include phenylalanine 26, 60–62 (ALE), and 84–86 (CII). (2S)-2-hydroxy-3-oxobutyl phosphate is bound at residue 89–90 (ET). Histidine 92 acts as the Proton donor in catalysis. Asparagine 117 lines the 5-amino-6-(D-ribitylamino)uracil pocket. Residue arginine 131 coordinates (2S)-2-hydroxy-3-oxobutyl phosphate.

The protein belongs to the DMRL synthase family.

It catalyses the reaction (2S)-2-hydroxy-3-oxobutyl phosphate + 5-amino-6-(D-ribitylamino)uracil = 6,7-dimethyl-8-(1-D-ribityl)lumazine + phosphate + 2 H2O + H(+). The protein operates within cofactor biosynthesis; riboflavin biosynthesis; riboflavin from 2-hydroxy-3-oxobutyl phosphate and 5-amino-6-(D-ribitylamino)uracil: step 1/2. Its function is as follows. Catalyzes the formation of 6,7-dimethyl-8-ribityllumazine by condensation of 5-amino-6-(D-ribitylamino)uracil with 3,4-dihydroxy-2-butanone 4-phosphate. This is the penultimate step in the biosynthesis of riboflavin. This is 6,7-dimethyl-8-ribityllumazine synthase from Polaromonas sp. (strain JS666 / ATCC BAA-500).